The primary structure comprises 78 residues: U5-ctenitoxin-Pk1a (78 aa).

Cystine bridges form between cysteine 6–cysteine 23, cysteine 13–cysteine 29, cysteine 20–cysteine 52, cysteine 22–cysteine 40, cysteine 31–cysteine 38, cysteine 58–cysteine 73, and cysteine 69–cysteine 77.

As to expression, expressed by the venom gland.

The protein localises to the secreted. Lethal neurotoxin. Causes spastic paralysis and death in mice in 4-6 minutes after intracerebroventricular injection at dose levels of 1.5 ug per mouse. The chain is U5-ctenitoxin-Pk1a from Phoneutria keyserlingi (Brazilian wandering spider).